We begin with the raw amino-acid sequence, 115 residues long: Hydrogenase maturation factor HypA (115 aa).

Position 2 (His-2) interacts with Ni(2+). The Zn(2+) site is built by Cys-73, Cys-76, Cys-89, and Cys-92.

The protein belongs to the HypA/HybF family.

Functionally, involved in the maturation of [NiFe] hydrogenases. Required for nickel insertion into the metal center of the hydrogenase. In Aquifex aeolicus (strain VF5), this protein is Hydrogenase maturation factor HypA.